Consider the following 503-residue polypeptide: Maturase K (503 aa).

It belongs to the intron maturase 2 family. MatK subfamily.

It localises to the plastid. The protein localises to the chloroplast. Its function is as follows. Usually encoded in the trnK tRNA gene intron. Probably assists in splicing its own and other chloroplast group II introns. The chain is Maturase K from Panax ginseng (Korean ginseng).